Consider the following 94-residue polypeptide: Acylphosphatase (94 aa).

The 88-residue stretch at 3 to 90 (RVHVIVEGRV…SDEKQFRIMY (88 aa)) folds into the Acylphosphatase-like domain. Residues Arg-18 and Asn-36 contribute to the active site.

This sequence belongs to the acylphosphatase family.

The catalysed reaction is an acyl phosphate + H2O = a carboxylate + phosphate + H(+). The chain is Acylphosphatase (acyP) from Geobacillus kaustophilus (strain HTA426).